A 183-amino-acid polypeptide reads, in one-letter code: Putative manganese efflux pump MntP 1 (183 aa).

Helical transmembrane passes span 6 to 26 (LFLLALAISLDAFGVILCIGI), 36 to 56 (MIFVFSFGFFQFFLSFLGGYI), 64 to 84 (IVPIPTIVGGLIIIIVGILMI), 100 to 120 (IMYLILGVSVSIDALVIGFTT), 130 to 150 (LFMSSLFMGLIATIICSLGII), and 158 to 178 (ISIISSYADYIGGIILILFGL).

It belongs to the MntP (TC 9.B.29) family.

Its subcellular location is the cell membrane. Functionally, probably functions as a manganese efflux pump. This Clostridium botulinum (strain Hall / ATCC 3502 / NCTC 13319 / Type A) protein is Putative manganese efflux pump MntP 1.